The sequence spans 1859 residues: Retinitis pigmentosa 1-like 1 protein (1859 aa).

Disordered regions lie at residues M1–R22 and R115–K154. The region spanning K42 to R126 is the Doublecortin 1 domain. Positions R115–R126 are enriched in basic and acidic residues. Polar residues predominate over residues K130 to V139. The Doublecortin 2 domain maps to R160–E239. Disordered regions lie at residues P263–R301, I426–W445, W457–H593, M700–A750, C868–A920, N952–S997, T1152–L1211, A1227–L1255, G1298–E1350, and L1567–F1859. A compositionally biased stretch (basic and acidic residues) spans W457–L472. 2 stretches are compositionally biased toward polar residues: residues G499 to H512 and P535 to A551. Residues S716 to S728 are compositionally biased toward low complexity. The segment covering P734–A750 has biased composition (polar residues). Residues G870–H883 are compositionally biased toward low complexity. Composition is skewed to polar residues over residues T1241 to S1252, E1336 to N1345, and L1567 to R1577. Residues G1616–K1632 are compositionally biased toward basic and acidic residues. Over residues P1641 to E1652 the composition is skewed to acidic residues. Positions E1700–S1720 are enriched in basic and acidic residues. Residues S1756–G1778 are compositionally biased toward polar residues.

Interacts with RP1; has a synergistic effect with RP1 in photoreceptor differentiation. In terms of tissue distribution, retinal-specific; expressed in photoreceptor.

It is found in the cytoplasm. It localises to the cytoskeleton. The protein resides in the cilium axoneme. The protein localises to the cell projection. Its subcellular location is the cilium. It is found in the photoreceptor outer segment. Required for the differentiation of photoreceptor cells. Plays a role in the organization of outer segment of rod and cone photoreceptors. This Mus musculus (Mouse) protein is Retinitis pigmentosa 1-like 1 protein (Rp1l1).